A 286-amino-acid chain; its full sequence is uncharacterized protein (286 aa).

In terms of domain architecture, Radical SAM core spans 2–221; it reads VDGMKHLILK…PIYIKNLQKR (220 aa). [4Fe-4S] cluster is bound by residues cysteine 16, cysteine 20, and cysteine 23.

The protein belongs to the radical SAM superfamily. Anaerobic sulfatase-maturating enzyme family. [4Fe-4S] cluster serves as cofactor.

This is an uncharacterized protein from Methanocaldococcus jannaschii (strain ATCC 43067 / DSM 2661 / JAL-1 / JCM 10045 / NBRC 100440) (Methanococcus jannaschii).